Reading from the N-terminus, the 376-residue chain is Chaperone protein DnaJ (376 aa).

The region spanning D5 to G70 is the J domain. The segment at G132–S210 adopts a CR-type zinc-finger fold. C145, C148, C162, C165, C184, C187, C198, and C201 together coordinate Zn(2+). CXXCXGXG motif repeat units follow at residues C145–G152, C162–G169, C184–G191, and C198–G205.

The protein belongs to the DnaJ family. In terms of assembly, homodimer. It depends on Zn(2+) as a cofactor.

The protein localises to the cytoplasm. Its function is as follows. Participates actively in the response to hyperosmotic and heat shock by preventing the aggregation of stress-denatured proteins and by disaggregating proteins, also in an autonomous, DnaK-independent fashion. Unfolded proteins bind initially to DnaJ; upon interaction with the DnaJ-bound protein, DnaK hydrolyzes its bound ATP, resulting in the formation of a stable complex. GrpE releases ADP from DnaK; ATP binding to DnaK triggers the release of the substrate protein, thus completing the reaction cycle. Several rounds of ATP-dependent interactions between DnaJ, DnaK and GrpE are required for fully efficient folding. Also involved, together with DnaK and GrpE, in the DNA replication of plasmids through activation of initiation proteins. This chain is Chaperone protein DnaJ, found in Shewanella halifaxensis (strain HAW-EB4).